A 166-amino-acid polypeptide reads, in one-letter code: Pyruvoyl-dependent arginine decarboxylase (166 aa).

Ser45 bears the Pyruvic acid (Ser) mark.

Belongs to the PdaD family. Pyruvate is required as a cofactor.

It carries out the reaction L-arginine + H(+) = agmatine + CO2. In Methanocella arvoryzae (strain DSM 22066 / NBRC 105507 / MRE50), this protein is Pyruvoyl-dependent arginine decarboxylase.